We begin with the raw amino-acid sequence, 160 residues long: Cytochrome b6-f complex subunit 4 (160 aa).

3 helical membrane-spanning segments follow: residues 36-56, 95-115, and 131-151; these read LLYIFPVVILGTIACTIGLAV, LLGVLLMASVPVGLLTVPFLE, and TVFLIGTAVAIWLGIGAALPI.

The protein belongs to the cytochrome b family. PetD subfamily. The 4 large subunits of the cytochrome b6-f complex are cytochrome b6, subunit IV (17 kDa polypeptide, petD), cytochrome f and the Rieske protein, while the 4 small subunits are petG, petL, petM and petN. The complex functions as a dimer.

It localises to the plastid. Its subcellular location is the chloroplast thylakoid membrane. In terms of biological role, component of the cytochrome b6-f complex, which mediates electron transfer between photosystem II (PSII) and photosystem I (PSI), cyclic electron flow around PSI, and state transitions. In Chara vulgaris (Common stonewort), this protein is Cytochrome b6-f complex subunit 4.